The sequence spans 458 residues: Serine/threonine-protein kinase tricornered (458 aa).

Positions 92-389 constitute a Protein kinase domain; sequence FEALKVIGRG…LEDLKSVPFF (298 aa). ATP-binding positions include 98–106 and Lys-121; that span reads IGRGAFGEV. Residues 118-179 are interaction with mats and Mob1; sequence YAMKVLRKAD…EFLPGGDMMT (62 aa). Asp-215 serves as the catalytic Proton acceptor. A Phosphoserine modification is found at Ser-287. The region spanning 390–458 is the AGC-kinase C-terminal domain; that stretch reads RGVDWEHIRE…YKRFEVRNLE (69 aa). Thr-448 carries the post-translational modification Phosphothreonine.

It belongs to the protein kinase superfamily. AGC Ser/Thr protein kinase family. As to quaternary structure, interacts with, and is activated by, Mob1. The cofactor is Mg(2+).

Its subcellular location is the cytoplasm. The protein localises to the nucleus. It carries out the reaction L-seryl-[protein] + ATP = O-phospho-L-seryl-[protein] + ADP + H(+). It catalyses the reaction L-threonyl-[protein] + ATP = O-phospho-L-threonyl-[protein] + ADP + H(+). In terms of biological role, serine/threonine-protein kinase involved in controlling cell structure and proliferation of a variety of polarized outgrowths including epidermal hairs, bristles, arista laterals, and dendrites. Together with fry, maintains the integrity of epidermal hairs and is an essential component of the signaling pathway regulating dendritic branching of sensory neurons. Reduces neurite outgrowth by phosphorylating pav/pavarotti, thereby inhibiting its function in microtubule-microtubule sliding. The polypeptide is Serine/threonine-protein kinase tricornered (Drosophila pseudoobscura pseudoobscura (Fruit fly)).